The following is a 389-amino-acid chain: Probable acyl-CoA dehydrogenase fadE25 (389 aa).

This sequence belongs to the acyl-CoA dehydrogenase family. The cofactor is FAD.

The enzyme catalyses a 2,3-saturated acyl-CoA + A = a 2,3-dehydroacyl-CoA + AH2. The sequence is that of Probable acyl-CoA dehydrogenase fadE25 (fadE25) from Mycobacterium bovis (strain ATCC BAA-935 / AF2122/97).